We begin with the raw amino-acid sequence, 363 residues long: tRNA dimethylallyltransferase (363 aa).

ATP is bound at residue 65-72 (GPTASGKS). Residue 67 to 72 (TASGKS) coordinates substrate. 2 interaction with substrate tRNA regions span residues 90–93 (DSMQ) and 214–218 (QRLIR).

This sequence belongs to the IPP transferase family. Monomer. Requires Mg(2+) as cofactor.

The catalysed reaction is adenosine(37) in tRNA + dimethylallyl diphosphate = N(6)-dimethylallyladenosine(37) in tRNA + diphosphate. Functionally, catalyzes the transfer of a dimethylallyl group onto the adenine at position 37 in tRNAs that read codons beginning with uridine, leading to the formation of N6-(dimethylallyl)adenosine (i(6)A). The polypeptide is tRNA dimethylallyltransferase (Rickettsia rickettsii (strain Sheila Smith)).